Here is a 291-residue protein sequence, read N- to C-terminus: m-AAA protease-interacting protein 1, mitochondrial (291 aa).

The transit peptide at 1–96 (MALAARLLPQ…SFPACPQRSY (96 aa)) directs the protein to the mitochondrion.

As to quaternary structure, interacts with AFG3L2. Interacts with SPG7. Interacts with SMDT1/EMRE (via the N-terminal transit peptide); interaction is direct and takes place before maturation of SMDT1/EMRE.

The protein localises to the mitochondrion matrix. In terms of biological role, promotes sorting of SMDT1/EMRE in mitochondria by ensuring its maturation. Interacts with the transit peptide region of SMDT1/EMRE precursor protein in the mitochondrial matrix, leading to protect it against protein degradation by YME1L1, thereby ensuring SMDT1/EMRE maturation by the mitochondrial processing peptidase (PMPCA and PMPCB). This chain is m-AAA protease-interacting protein 1, mitochondrial, found in Homo sapiens (Human).